Reading from the N-terminus, the 1602-residue chain is MAP kinase-activating death domain protein (1602 aa).

The uDENN domain occupies Tyr13–Asp267. Positions Pro105–Ala121 are enriched in basic and acidic residues. The disordered stretch occupies residues Pro105–Arg167. The span at Ala126 to Ser137 shows a compositional bias: low complexity. The span at Gly138–Pro156 shows a compositional bias: polar residues. Ser155 carries the phosphoserine modification. Basic residues predominate over residues Arg157–Asn166. A cDENN domain is found at Arg288–Lys428. One can recognise a dDENN domain in the interval Ala430–Arg564. Disordered stretches follow at residues Ala603 to Ser635 and Gln676 to Glu840. A compositionally biased stretch (acidic residues) spans Ser614–Asp629. 2 positions are modified to phosphoserine: Ser688 and Ser691. Polar residues predominate over residues Ser688–Arg698. Low complexity predominate over residues Ser699–Thr711. Phosphoserine is present on Ser778. Polar residues predominate over residues Glu789–Arg803. A phosphoserine mark is found at Ser812, Ser817, and Ser819. A compositionally biased stretch (low complexity) spans Arg826 to Thr839. Ser857, Ser861, Ser895, Ser900, and Ser909 each carry phosphoserine. Disordered regions lie at residues Lys870 to Asn920, Lys1030 to Ser1089, and Thr1113 to Glu1231. A compositionally biased stretch (polar residues) spans Gln911 to Asn920. A Phosphoserine modification is found at Ser1038. Thr1040 and Thr1045 each carry phosphothreonine. Position 1089 is a phosphoserine (Ser1089). Over residues Gln1119–Arg1134 the composition is skewed to polar residues. The segment covering Ser1151–Ser1162 has biased composition (low complexity). Positions Ser1191–Ile1209 are enriched in polar residues. Thr1194 carries the post-translational modification Phosphothreonine. A phosphoserine mark is found at Ser1196 and Ser1225. Residues Gly1295–Glu1370 enclose the Death domain.

Belongs to the MADD family. In terms of assembly, interacts (via death domain) with TNFRSF1A (via death domain). Interacts with PIDD1. Interacts with YWHAZ. Interacts (via death domain) with KIF1B; links the motor KIF1B to Rab3-carrying vesicles in anterograde synaptic vesicle transport. Interacts with KIF1A. Interacts (via uDENN domain) with RAB3A, RAB3B, RAB3C and RAB3D; the GTP-bound form of the Rab proteins is preferred for interaction. As to expression, expressed in all tissues examined with the highest expression in brain.

The protein resides in the cell membrane. It is found in the cytoplasm. It localises to the cell projection. The protein localises to the axon. Guanyl-nucleotide exchange factor that regulates small GTPases of the Rab family. Converts GDP-bound inactive form of RAB27A and RAB27B to the GTP-bound active forms. Converts GDP-bound inactive form of RAB3A, RAB3C and RAB3D to the GTP-bound active forms, GTPases involved in synaptic vesicle exocytosis and vesicle secretion. Plays a role in synaptic vesicle formation and in vesicle trafficking at the neuromuscular junction. Involved in up-regulating a post-docking step of synaptic exocytosis in central synapses. Probably by binding to the motor proteins KIF1B and KIF1A, mediates motor-dependent transport of GTP-RAB3A-positive vesicles to the presynaptic nerve terminals. Plays a role in TNFA-mediated activation of the MAPK pathway, including ERK1/2. May link TNFRSF1A with MAP kinase activation. May be involved in the regulation of TNFA-induced apoptosis. This chain is MAP kinase-activating death domain protein, found in Rattus norvegicus (Rat).